Reading from the N-terminus, the 210-residue chain is MKEVAVYQIPVLSPSGRRELAADLPAEINPHLLWEVVRWQLAKRRRGTASTKTRGEVAYSGRKIWPQKHTGRARHGDIGAPIFVGGGVVFGPKPRDYSYTLPKKVRKKGLAMAVADRAREGKLLLVEAFAGVNGKTKEFLAWAKEAGLDGSESVLLVTGNELVRRAARNLPWVVTLAPEGLNVYDIVRTERLVMDLDAWEVFQNRIGGEA.

In terms of assembly, part of the 50S ribosomal subunit. In terms of processing, the N-terminus is blocked.

Functionally, one of the primary rRNA binding proteins, this protein initially binds near the 5'-end of the 23S rRNA. It is important during the early stages of 50S assembly. It makes multiple contacts with different domains of the 23S rRNA in the assembled 50S subunit and ribosome. Its function is as follows. Forms part of the polypeptide exit tunnel. This protein can be incorporated into E.coli ribosomes in vivo, which resulted in decreased peptidyltransferase (Ptase) activity of the hybrid ribosomes. The hybrid 50S subunits associate less well with 30S subunits to form the ribosome. This chain is Large ribosomal subunit protein uL4 (rplD), found in Thermus thermophilus (strain ATCC 27634 / DSM 579 / HB8).